The chain runs to 125 residues: Small ribosomal subunit protein eS6 (125 aa).

The disordered stretch occupies residues 90-109; sequence KGPGFRPKEKGERRKKTVRG.

This sequence belongs to the eukaryotic ribosomal protein eS6 family. As to quaternary structure, part of the 30S ribosomal subunit.

This Pyrococcus furiosus (strain ATCC 43587 / DSM 3638 / JCM 8422 / Vc1) protein is Small ribosomal subunit protein eS6.